Reading from the N-terminus, the 430-residue chain is Enolase (430 aa).

Residue Gln163 participates in (2R)-2-phosphoglycerate binding. The active-site Proton donor is Glu205. Residues Asp242, Glu287, and Asp314 each coordinate Mg(2+). Positions 339, 368, 369, and 390 each coordinate (2R)-2-phosphoglycerate. Lys339 serves as the catalytic Proton acceptor.

The protein belongs to the enolase family. Mg(2+) is required as a cofactor.

It is found in the cytoplasm. The protein localises to the secreted. The protein resides in the cell surface. It carries out the reaction (2R)-2-phosphoglycerate = phosphoenolpyruvate + H2O. It participates in carbohydrate degradation; glycolysis; pyruvate from D-glyceraldehyde 3-phosphate: step 4/5. Its function is as follows. Catalyzes the reversible conversion of 2-phosphoglycerate (2-PG) into phosphoenolpyruvate (PEP). It is essential for the degradation of carbohydrates via glycolysis. This chain is Enolase, found in Bacillus velezensis (strain DSM 23117 / BGSC 10A6 / LMG 26770 / FZB42) (Bacillus amyloliquefaciens subsp. plantarum).